A 136-amino-acid polypeptide reads, in one-letter code: Ribonuclease P protein component (136 aa).

The protein belongs to the RnpA family. Consists of a catalytic RNA component (M1 or rnpB) and a protein subunit.

It carries out the reaction Endonucleolytic cleavage of RNA, removing 5'-extranucleotides from tRNA precursor.. RNaseP catalyzes the removal of the 5'-leader sequence from pre-tRNA to produce the mature 5'-terminus. It can also cleave other RNA substrates such as 4.5S RNA. The protein component plays an auxiliary but essential role in vivo by binding to the 5'-leader sequence and broadening the substrate specificity of the ribozyme. The sequence is that of Ribonuclease P protein component from Burkholderia mallei (strain NCTC 10247).